A 54-amino-acid chain; its full sequence is Large ribosomal subunit protein bL32 (54 aa).

Positions 1-24 (MAVQKSKPTRSKRGMRRSHDSLKE) are disordered. Residues 7–16 (KPTRSKRGMR) show a composition bias toward basic residues.

This sequence belongs to the bacterial ribosomal protein bL32 family.

The protein is Large ribosomal subunit protein bL32 of Buchnera aphidicola subsp. Schizaphis graminum (strain Sg).